A 310-amino-acid chain; its full sequence is MKKITVIDSHTGGEPTRLVIDGFPDLGRGSMAERLQILEREHDQWRRACVLEPRGSDVLVGALLCQPQAGDACAGVIFFNNSGYLGMCGHGTIGLVRSLYHLGRIDQGVHRIETPVGTVEATLHEDLSVSVRNVPAYRYRTQVMLQLPGHGKVHGDIAWGGNWFFLISDHGQRIALDNVEALTHYTRDVRQALEAAGITGAEGGVIDHIELFADDPQADSRNFVLCPGKAYDRSPCGTGTSAKLACLAADGKLAPGQAWRQASVIGSQFSAHYEKVGEQLIPILRGSAHISAEATLLLDDSDPFVWGIGS.

Cysteine 88 functions as the Proton acceptor in the catalytic mechanism. Substrate is bound by residues 89–90, histidine 208, and aspartate 232; that span reads GH. The active-site Proton donor is the cysteine 236. Substrate is bound at residue 237–238; it reads GT.

This sequence belongs to the proline racemase family.

The enzyme catalyses trans-4-hydroxy-L-proline = cis-4-hydroxy-D-proline. In terms of biological role, catalyzes the epimerization of trans-4-hydroxy-L-proline (t4LHyp) to cis-4-hydroxy-D-proline (c4DHyp). Is likely involved in a degradation pathway that converts t4LHyp to alpha-ketoglutarate. Displays no proline racemase activity. The protein is 4-hydroxyproline 2-epimerase of Pseudomonas fluorescens (strain ATCC BAA-477 / NRRL B-23932 / Pf-5).